The sequence spans 341 residues: Adhesion protein Bd37 (341 aa).

Residues 1–21 form the signal peptide; sequence MKTSKILNTAAICLLAMGFNG. 2 N-linked (GlcNAc...) asparagine glycosylation sites follow: Asn23 and Asn30. An intrachain disulfide couples Cys26 to Cys307. A disordered region spans residues 36–75; that stretch reads AAANPVVSTPGNDAQQAGTQQGGANSKSVPEQQPQQAAGE. Low complexity predominate over residues 49 to 59; that stretch reads AQQAGTQQGGA. Polar residues predominate over residues 60-75; it reads NSKSVPEQQPQQAAGE. Ser311 carries GPI-anchor amidated serine lipidation. Positions 312 to 341 are cleaved as a propeptide — removed in mature form; that stretch reads GQGSSPKKPSFAAVPSSLSAIVFGIIVSMF.

The signal sequence is cleaved. In terms of processing, glycosylated. Post-translationally, palmitoylated. Not myristoylated.

The protein localises to the cell membrane. It localises to the secreted. It is found in the vesicle. Its function is as follows. Binds to host erythrocytes. The protein is Adhesion protein Bd37 of Babesia divergens.